We begin with the raw amino-acid sequence, 306 residues long: Pantothenate kinase (306 aa).

91–98 (GSVAVGKS) is a binding site for ATP.

Belongs to the prokaryotic pantothenate kinase family.

The protein localises to the cytoplasm. The catalysed reaction is (R)-pantothenate + ATP = (R)-4'-phosphopantothenate + ADP + H(+). It participates in cofactor biosynthesis; coenzyme A biosynthesis; CoA from (R)-pantothenate: step 1/5. This is Pantothenate kinase (coaA) from Streptococcus pyogenes serotype M3 (strain ATCC BAA-595 / MGAS315).